Reading from the N-terminus, the 446-residue chain is 3-phosphoshikimate 1-carboxyvinyltransferase (446 aa).

The 3-phosphoshikimate site is built by K27, S28, and R32. K27 provides a ligand contact to phosphoenolpyruvate. Phosphoenolpyruvate contacts are provided by G100 and R128. Positions 177, 179, 330, and 357 each coordinate 3-phosphoshikimate. Phosphoenolpyruvate is bound at residue Q179. D330 (proton acceptor) is an active-site residue. Residues R361 and R406 each contribute to the phosphoenolpyruvate site.

Belongs to the EPSP synthase family. In terms of assembly, monomer.

It is found in the cytoplasm. The catalysed reaction is 3-phosphoshikimate + phosphoenolpyruvate = 5-O-(1-carboxyvinyl)-3-phosphoshikimate + phosphate. It functions in the pathway metabolic intermediate biosynthesis; chorismate biosynthesis; chorismate from D-erythrose 4-phosphate and phosphoenolpyruvate: step 6/7. Its function is as follows. Catalyzes the transfer of the enolpyruvyl moiety of phosphoenolpyruvate (PEP) to the 5-hydroxyl of shikimate-3-phosphate (S3P) to produce enolpyruvyl shikimate-3-phosphate and inorganic phosphate. The chain is 3-phosphoshikimate 1-carboxyvinyltransferase from Sphingopyxis alaskensis (strain DSM 13593 / LMG 18877 / RB2256) (Sphingomonas alaskensis).